The chain runs to 104 residues: Large ribosomal subunit protein uL24 (104 aa).

This sequence belongs to the universal ribosomal protein uL24 family. As to quaternary structure, part of the 50S ribosomal subunit.

In terms of biological role, one of two assembly initiator proteins, it binds directly to the 5'-end of the 23S rRNA, where it nucleates assembly of the 50S subunit. Functionally, one of the proteins that surrounds the polypeptide exit tunnel on the outside of the subunit. In Corynebacterium diphtheriae (strain ATCC 700971 / NCTC 13129 / Biotype gravis), this protein is Large ribosomal subunit protein uL24.